Consider the following 431-residue polypeptide: MNHAHSQALFARAQARIPGGVNSPVRAFRGVGGDPVFFREGAGAWLTDVDGNRYVDLVGSWGPLILGHAYPPILDAIIDAARRGSSYGAPHADEVEFAELICATMPAVEMVRLVSSGTEATVAAIRVARGFTGREHILKFEGCFHGAGDPFLVKAGSGVETLGLPDSPGVPSALAKLTLTAPFNDLAAVERIFAENGQDIACAIIEPVVGNMGVLVPKPGYLEGLQALCQKHGVLLVLDEVMTGFRLSRGGAQELYGLKPDLTTMAKVIGGGMPMGAYGGRRDIMEKVAPAGPVYQSGTLSGNPVAVAAGLACLKALAAPGTYARLEEVSRMLEVGLLAEAKAADVPVTVNRVGSMLTVFFTGEPVYDYTSAKKADTARFGKFFHAMLNESVYLPPSQFEAAFVSLAIGEPEVAHVLAAARKAFRSLGKTG.

At Lys-267 the chain carries N6-(pyridoxal phosphate)lysine.

Belongs to the class-III pyridoxal-phosphate-dependent aminotransferase family. HemL subfamily. As to quaternary structure, homodimer. The cofactor is pyridoxal 5'-phosphate.

It localises to the cytoplasm. The enzyme catalyses (S)-4-amino-5-oxopentanoate = 5-aminolevulinate. Its pathway is porphyrin-containing compound metabolism; protoporphyrin-IX biosynthesis; 5-aminolevulinate from L-glutamyl-tRNA(Glu): step 2/2. This is Glutamate-1-semialdehyde 2,1-aminomutase from Myxococcus xanthus (strain DK1622).